The following is a 304-amino-acid chain: N-acetylmuramic acid 6-phosphate etherase (304 aa).

The SIS domain maps to 57–220 (AVKGLSAGGR…STATMVGLGK (164 aa)). The active-site Proton donor is the Glu-85. Residue Glu-116 is part of the active site.

It belongs to the GCKR-like family. MurNAc-6-P etherase subfamily. In terms of assembly, homodimer.

It carries out the reaction N-acetyl-D-muramate 6-phosphate + H2O = N-acetyl-D-glucosamine 6-phosphate + (R)-lactate. The protein operates within amino-sugar metabolism; N-acetylmuramate degradation. In terms of biological role, specifically catalyzes the cleavage of the D-lactyl ether substituent of MurNAc 6-phosphate, producing GlcNAc 6-phosphate and D-lactate. This Cutibacterium acnes (strain DSM 16379 / KPA171202) (Propionibacterium acnes) protein is N-acetylmuramic acid 6-phosphate etherase.